The sequence spans 523 residues: Bifunctional purine biosynthesis protein PurH (523 aa).

An MGS-like domain is found at 4-152; that stretch reads DHIRRPIRRA…KNHPSVAVVT (149 aa).

It belongs to the PurH family.

It catalyses the reaction (6R)-10-formyltetrahydrofolate + 5-amino-1-(5-phospho-beta-D-ribosyl)imidazole-4-carboxamide = 5-formamido-1-(5-phospho-D-ribosyl)imidazole-4-carboxamide + (6S)-5,6,7,8-tetrahydrofolate. The enzyme catalyses IMP + H2O = 5-formamido-1-(5-phospho-D-ribosyl)imidazole-4-carboxamide. The protein operates within purine metabolism; IMP biosynthesis via de novo pathway; 5-formamido-1-(5-phospho-D-ribosyl)imidazole-4-carboxamide from 5-amino-1-(5-phospho-D-ribosyl)imidazole-4-carboxamide (10-formyl THF route): step 1/1. Its pathway is purine metabolism; IMP biosynthesis via de novo pathway; IMP from 5-formamido-1-(5-phospho-D-ribosyl)imidazole-4-carboxamide: step 1/1. The protein is Bifunctional purine biosynthesis protein PurH of Mycobacterium marinum (strain ATCC BAA-535 / M).